We begin with the raw amino-acid sequence, 396 residues long: Probable protein phosphatase 2C 25 (396 aa).

Positions 32-98 are disordered; it reads ESLSLTLSHR…SPPGGVLKRK (67 aa). Low complexity predominate over residues 44-61; the sequence is QTSSPSSPSTTVSSPKSP. One can recognise a PPM-type phosphatase domain in the interval 139-392; that stretch reads GYSVYCKRGR…DDISVMLIPL (254 aa). Mn(2+) contacts are provided by Asp175, Gly176, Asp338, and Asp383.

It belongs to the PP2C family. As to quaternary structure, interacts with MPK4 and MPK6. The cofactor is Mg(2+). It depends on Mn(2+) as a cofactor.

The protein resides in the cytoplasm. Its subcellular location is the nucleus. The enzyme catalyses O-phospho-L-seryl-[protein] + H2O = L-seryl-[protein] + phosphate. It carries out the reaction O-phospho-L-threonyl-[protein] + H2O = L-threonyl-[protein] + phosphate. Its function is as follows. Protein phosphatase that negatively regulates defense respones. Inactivates MPK4 and MPK6 MAP kinases involved in stress and defense signaling. This is Probable protein phosphatase 2C 25 from Arabidopsis thaliana (Mouse-ear cress).